The primary structure comprises 459 residues: MTLTQFGGLFVVYLISLVFILTLTYQEFRRVRFNFNIFFSLLYLLTFYFGFPLTCLLVFQFDVEVVPVDALLHALLASTCFYGIYYVSYKTRLRKPSMQPKAPVFTMNRVETNFTWLLLASVAVVTVGLFFMQNGFLLFKLQSYSQIFSSQVSGVALKRFFYFFIPAMLVVYFLKPTQLRWLFFLISTVAFGILTYVVVGGTRANIIIAFALFLFIGIVRGWITLWMLVTAGAIGIVGMFWLALKRYSLDVSGAEAFYTFLYLTRDTFSPWENFALLLNNYDKIDFQGLAPIIRDFYVFIPSWLWPGRPDAVLNSANYFTWEVLDNHSGLAISPTLIGSLVVMGGVLFIPVGAIVVGLIIKWFDWIYELGKQETNRYKAAILQAFCFGAIFNMIVLAREGVDSFVSRVVFFCIIFGLCLVIAKLLYWLFESAGLIRMYLTGNRVVSQKCPLQCEERKWS.

Helical transmembrane passes span 3–23, 37–57, 65–85, 119–139, 154–174, 181–201, 206–226, 227–247, 340–360, 377–397, and 409–429; these read LTQF…ILTL, IFFS…TCLL, VVPV…YGIY, LASV…FLLF, GVAL…VYFL, WLFF…VVGG, IIIA…ITLW, MLVT…LKRY, LVVM…GLII, YKAA…IVLA, and VFFC…YWLF.

It belongs to the WzyE family. Probably part of a complex composed of WzxE, WzyE and WzzE.

It localises to the cell inner membrane. It functions in the pathway bacterial outer membrane biogenesis; enterobacterial common antigen biosynthesis. Its function is as follows. Probably involved in the polymerization of enterobacterial common antigen (ECA) trisaccharide repeat units. This is Probable ECA polymerase from Photorhabdus laumondii subsp. laumondii (strain DSM 15139 / CIP 105565 / TT01) (Photorhabdus luminescens subsp. laumondii).